The primary structure comprises 453 residues: MLLIKRYLMDPESLRRQIMNVYKCYMWKRAFHSNRSLLEVKRREKSLQRKILERILRPKEENAVKKSGFKLWSSHLNNPHKTYMRLEELQRRIMEEVHVEGIKKNDKLFNEINQWHFQNENTSTVRTPTLLIHGYAASSMSFFRNYPGLSKHIRNLYSIDMPASGLSSVPSLEINTTTPLPLDIKFIGENKFKVPYTINANHNKFVIQMYEDFYLDRIEQWRIDNKLGKMNVVGHSFGGYLSFKYAVKYPNSVNKLCLVSPLGVERNIWSVNNNFHSNTLYTIDFKNPNSKFYSKRNMIPKYLFEQQFHILRMMGPLGAKLCWNYIMAAYSRVPSLAYKEYIFELFYGKGGIPEVTTDIFKALFSRCILAKDPLMDSLQYLNVKKLLIVYGQYDWMNKKAGMFMVKELNNLKNCLEGASYLEIPSSGHNLFLDNPESFNQSIVSFLSDETKSP.

Residues 130–435 (LLIHGYAASS…SGHNLFLDNP (306 aa)) enclose the AB hydrolase-1 domain. The HXXXXD motif motif lies at 428–433 (HNLFLD).

It belongs to the peptidase S33 family. ABHD4/ABHD5 subfamily.

It localises to the mitochondrion. Its function is as follows. May be involved in cell wall organization and biogenesis. This Saccharomyces cerevisiae (strain ATCC 204508 / S288c) (Baker's yeast) protein is Protein ECM18 (ECM18).